The primary structure comprises 346 residues: Biotin synthase (346 aa).

The Radical SAM core domain maps to 38–256 (QQVQVSTLLS…IAVARIMMPT (219 aa)). Residues Cys53, Cys57, and Cys60 each coordinate [4Fe-4S] cluster. Residues Cys97, Cys128, Cys188, and Arg260 each contribute to the [2Fe-2S] cluster site.

It belongs to the radical SAM superfamily. Biotin synthase family. In terms of assembly, homodimer. It depends on [4Fe-4S] cluster as a cofactor. [2Fe-2S] cluster is required as a cofactor.

It carries out the reaction (4R,5S)-dethiobiotin + (sulfur carrier)-SH + 2 reduced [2Fe-2S]-[ferredoxin] + 2 S-adenosyl-L-methionine = (sulfur carrier)-H + biotin + 2 5'-deoxyadenosine + 2 L-methionine + 2 oxidized [2Fe-2S]-[ferredoxin]. The protein operates within cofactor biosynthesis; biotin biosynthesis; biotin from 7,8-diaminononanoate: step 2/2. In terms of biological role, catalyzes the conversion of dethiobiotin (DTB) to biotin by the insertion of a sulfur atom into dethiobiotin via a radical-based mechanism. This Citrobacter koseri (strain ATCC BAA-895 / CDC 4225-83 / SGSC4696) protein is Biotin synthase.